The chain runs to 248 residues: N-acylneuraminate-9-phosphatase (248 aa).

Residue aspartate 12 coordinates Mg(2+). Residues leucine 13, aspartate 14, threonine 131, asparagine 132, and lysine 164 each coordinate phosphate. A Mg(2+)-binding site is contributed by aspartate 14. Aspartate 189 contacts Mg(2+).

Belongs to the HAD-like hydrolase superfamily. NANP family. The cofactor is Mg(2+).

It carries out the reaction N-acetylneuraminate 9-phosphate + H2O = N-acetylneuraminate + phosphate. The enzyme catalyses N-glycoloylneuraminate 9-phosphate + H2O = N-glycoloylneuraminate + phosphate. It functions in the pathway amino-sugar metabolism; N-acetylneuraminate biosynthesis. With respect to regulation, inhibited by calcium. Inhibited by vanadate, sodium orthovanadate and phosphonate. Functionally, catalyzes the dephosphorylation of N-acylneuraminate 9-phosphate (Neu5Ac-9-P) to N-acetylneuraminic acid (Neu5Ac or sialic acid). Can also use N-glycoloylneuraminate 9-phosphate as substrate. The protein is N-acylneuraminate-9-phosphatase of Rattus norvegicus (Rat).